Reading from the N-terminus, the 369-residue chain is Chorismate synthase (369 aa).

Positions 48 and 54 each coordinate NADP(+). Residues 125–127 (RSS), 238–239 (NA), Gly-278, 293–297 (KPTSS), and Arg-319 contribute to the FMN site.

The protein belongs to the chorismate synthase family. Homotetramer. Requires FMNH2 as cofactor.

It catalyses the reaction 5-O-(1-carboxyvinyl)-3-phosphoshikimate = chorismate + phosphate. It participates in metabolic intermediate biosynthesis; chorismate biosynthesis; chorismate from D-erythrose 4-phosphate and phosphoenolpyruvate: step 7/7. Its function is as follows. Catalyzes the anti-1,4-elimination of the C-3 phosphate and the C-6 proR hydrogen from 5-enolpyruvylshikimate-3-phosphate (EPSP) to yield chorismate, which is the branch point compound that serves as the starting substrate for the three terminal pathways of aromatic amino acid biosynthesis. This reaction introduces a second double bond into the aromatic ring system. The chain is Chorismate synthase from Cupriavidus necator (strain ATCC 17699 / DSM 428 / KCTC 22496 / NCIMB 10442 / H16 / Stanier 337) (Ralstonia eutropha).